A 603-amino-acid chain; its full sequence is NADPH-dependent diflavin oxidoreductase 1 (603 aa).

Residues 8–152 (VLVLYGSETG…SFVRWTGRLY (145 aa)) enclose the Flavodoxin-like domain. Residues 14 to 19 (SETGNA), 61 to 64 (STTG), 99 to 108 (LGDSTYLKFN), and Glu134 contribute to the FMN site. Residues 210 to 457 (PDGWTATLVG…RKPVLSPIHG (248 aa)) enclose the FAD-binding FR-type domain. Residues Arg358, 388–391 (RDFS), and 429–432 (GLCS) each bind FAD. Residues Thr472, 528–529 (SR), and 534–538 (KIYVQ) each bind NADP(+). Trp603 serves as a coordination point for FAD.

This sequence belongs to the NADPH-dependent diflavin oxidoreductase NDOR1 family. It in the N-terminal section; belongs to the flavodoxin family. The protein in the C-terminal section; belongs to the flavoprotein pyridine nucleotide cytochrome reductase family. In terms of assembly, interacts with DRE2; as part of the cytosolic iron-sulfur (Fe-S) protein assembly (CIA) machinery. The cofactor is FAD. It depends on FMN as a cofactor.

The protein localises to the cytoplasm. The protein resides in the mitochondrion. The catalysed reaction is 2 oxidized [2Fe-2S]-[protein] + NADPH = 2 reduced [2Fe-2S]-[protein] + NADP(+) + H(+). Functionally, NADPH-dependent reductase which is a central component of the cytosolic iron-sulfur (Fe-S) protein assembly (CIA) machinery. Transfers electrons from NADPH via its FAD and FMN prosthetic groups to the [2Fe-2S] cluster of DRE2, another key component of the CIA machinery. In turn, this reduced cluster provides electrons for assembly of cytosolic iron-sulfur cluster proteins. Positively controls H(2)O(2)-induced cell death. The protein is NADPH-dependent diflavin oxidoreductase 1 of Gibberella zeae (strain ATCC MYA-4620 / CBS 123657 / FGSC 9075 / NRRL 31084 / PH-1) (Wheat head blight fungus).